The primary structure comprises 191 residues: Protein GrpE (191 aa).

The protein belongs to the GrpE family. As to quaternary structure, homodimer.

The protein localises to the cytoplasm. Functionally, participates actively in the response to hyperosmotic and heat shock by preventing the aggregation of stress-denatured proteins, in association with DnaK and GrpE. It is the nucleotide exchange factor for DnaK and may function as a thermosensor. Unfolded proteins bind initially to DnaJ; upon interaction with the DnaJ-bound protein, DnaK hydrolyzes its bound ATP, resulting in the formation of a stable complex. GrpE releases ADP from DnaK; ATP binding to DnaK triggers the release of the substrate protein, thus completing the reaction cycle. Several rounds of ATP-dependent interactions between DnaJ, DnaK and GrpE are required for fully efficient folding. In Listeria monocytogenes serotype 1/2a (strain 10403S), this protein is Protein GrpE.